The sequence spans 100 residues: Small ribosomal subunit protein bS6 (100 aa).

The protein belongs to the bacterial ribosomal protein bS6 family.

Binds together with bS18 to 16S ribosomal RNA. This Tropheryma whipplei (strain Twist) (Whipple's bacillus) protein is Small ribosomal subunit protein bS6.